The following is a 588-amino-acid chain: Adenine deaminase (588 aa).

The protein belongs to the metallo-dependent hydrolases superfamily. Adenine deaminase family. Mn(2+) is required as a cofactor.

The enzyme catalyses adenine + H2O + H(+) = hypoxanthine + NH4(+). In Desulforamulus reducens (strain ATCC BAA-1160 / DSM 100696 / MI-1) (Desulfotomaculum reducens), this protein is Adenine deaminase.